We begin with the raw amino-acid sequence, 271 residues long: MSSHADSKPWTVPALAQAKREGRKLVMLTAYDAGFARTFDANGVDLILVGDSLGMVVQGHDSTLPVTTADMVYHTASVARALDRALLVADLSFQADATPERALDAATQLLQAGAEMVKIEGAGHKLEVIRYLVEREIPVCSHLGLTPQSVLRFGGYKVQGRGEAGEQLRRDAQAVVDAGASLLVLECVPTPIATQISAELSVPTIGIGAGPGCDGQVLVMHDMLGLDSGHRRPKFVKDFLAEGGSVAGAVRAYAQAVRDGSFPDAEHAYAA.

The Mg(2+) site is built by D51 and D90. 3-methyl-2-oxobutanoate contacts are provided by residues 51 to 52, D90, and K118; that span reads DS. Residue E120 coordinates Mg(2+). The Proton acceptor role is filled by E186.

The protein belongs to the PanB family. Homodecamer; pentamer of dimers. Requires Mg(2+) as cofactor.

It is found in the cytoplasm. The enzyme catalyses 3-methyl-2-oxobutanoate + (6R)-5,10-methylene-5,6,7,8-tetrahydrofolate + H2O = 2-dehydropantoate + (6S)-5,6,7,8-tetrahydrofolate. Its pathway is cofactor biosynthesis; (R)-pantothenate biosynthesis; (R)-pantoate from 3-methyl-2-oxobutanoate: step 1/2. Functionally, catalyzes the reversible reaction in which hydroxymethyl group from 5,10-methylenetetrahydrofolate is transferred onto alpha-ketoisovalerate to form ketopantoate. The sequence is that of 3-methyl-2-oxobutanoate hydroxymethyltransferase from Xanthomonas axonopodis pv. citri (strain 306).